The chain runs to 144 residues: Deoxyuridine 5'-triphosphate nucleotidohydrolase (144 aa).

Substrate contacts are provided by residues 63–65, Asn76, and 80–82; these read RSG and TID.

Belongs to the dUTPase family. It depends on Mg(2+) as a cofactor.

It carries out the reaction dUTP + H2O = dUMP + diphosphate + H(+). Its pathway is pyrimidine metabolism; dUMP biosynthesis; dUMP from dCTP (dUTP route): step 2/2. Functionally, this enzyme is involved in nucleotide metabolism: it produces dUMP, the immediate precursor of thymidine nucleotides and it decreases the intracellular concentration of dUTP so that uracil cannot be incorporated into DNA. This chain is Deoxyuridine 5'-triphosphate nucleotidohydrolase, found in Bacteroides fragilis (strain YCH46).